We begin with the raw amino-acid sequence, 208 residues long: Uracil phosphoribosyltransferase (208 aa).

Residues arginine 78, arginine 103, and 130 to 138 (DPMLATGGS) contribute to the 5-phospho-alpha-D-ribose 1-diphosphate site. Residues isoleucine 193 and 198 to 200 (GDA) contribute to the uracil site. A 5-phospho-alpha-D-ribose 1-diphosphate-binding site is contributed by aspartate 199.

It belongs to the UPRTase family. Mg(2+) serves as cofactor.

The catalysed reaction is UMP + diphosphate = 5-phospho-alpha-D-ribose 1-diphosphate + uracil. It participates in pyrimidine metabolism; UMP biosynthesis via salvage pathway; UMP from uracil: step 1/1. With respect to regulation, allosterically activated by GTP. In terms of biological role, catalyzes the conversion of uracil and 5-phospho-alpha-D-ribose 1-diphosphate (PRPP) to UMP and diphosphate. The chain is Uracil phosphoribosyltransferase from Wolinella succinogenes (strain ATCC 29543 / DSM 1740 / CCUG 13145 / JCM 31913 / LMG 7466 / NCTC 11488 / FDC 602W) (Vibrio succinogenes).